Consider the following 292-residue polypeptide: ATP synthase subunit a (292 aa).

The next 6 membrane-spanning stretches (helical) occupy residues 37–57 (IDSV…FWLC), 96–116 (FIAP…AMDM), 144–164 (VVPT…LVLC), 192–212 (PVFA…EYVA), 230–250 (LVFM…SGVL), and 263–283 (AIFH…LALI).

Belongs to the ATPase A chain family. F-type ATPases have 2 components, CF(1) - the catalytic core - and CF(0) - the membrane proton channel. CF(1) has five subunits: alpha(3), beta(3), gamma(1), delta(1), epsilon(1). CF(0) has three main subunits: a(1), b(2) and c(9-12). The alpha and beta chains form an alternating ring which encloses part of the gamma chain. CF(1) is attached to CF(0) by a central stalk formed by the gamma and epsilon chains, while a peripheral stalk is formed by the delta and b chains.

It is found in the cell inner membrane. In terms of biological role, key component of the proton channel; it plays a direct role in the translocation of protons across the membrane. This chain is ATP synthase subunit a, found in Paracidovorax citrulli (strain AAC00-1) (Acidovorax citrulli).